The chain runs to 311 residues: Small ribosomal subunit biogenesis GTPase RsgA (311 aa).

A CP-type G domain is found at 88-246 (SKEKEQVIAA…VIDTPGIREF (159 aa)). GTP is bound by residues 137 to 140 (NKID) and 188 to 196 (GHSGVGKST). Residues cysteine 270, cysteine 275, histidine 277, and cysteine 283 each contribute to the Zn(2+) site.

It belongs to the TRAFAC class YlqF/YawG GTPase family. RsgA subfamily. Monomer. Associates with 30S ribosomal subunit, binds 16S rRNA. Zn(2+) serves as cofactor.

The protein localises to the cytoplasm. In terms of biological role, one of several proteins that assist in the late maturation steps of the functional core of the 30S ribosomal subunit. Helps release RbfA from mature subunits. May play a role in the assembly of ribosomal proteins into the subunit. Circularly permuted GTPase that catalyzes slow GTP hydrolysis, GTPase activity is stimulated by the 30S ribosomal subunit. This is Small ribosomal subunit biogenesis GTPase RsgA from Chlorobaculum parvum (strain DSM 263 / NCIMB 8327) (Chlorobium vibrioforme subsp. thiosulfatophilum).